Reading from the N-terminus, the 855-residue chain is Sucrose synthase 7 (855 aa).

The interval 279 to 758 is GT-B glycosyltransferase; sequence SIFNIVIFSI…GLQRIYECYT (480 aa).

Belongs to the glycosyltransferase 1 family. Plant sucrose synthase subfamily. In terms of tissue distribution, predominantly expressed in roots, flowers and immature seeds.

Its subcellular location is the cytoplasm. It is found in the membrane. It carries out the reaction an NDP-alpha-D-glucose + D-fructose = a ribonucleoside 5'-diphosphate + sucrose + H(+). Sucrose-cleaving enzyme that provides UDP-glucose and fructose for various metabolic pathways. This is Sucrose synthase 7 (SUS7) from Oryza sativa subsp. japonica (Rice).